The following is a 219-amino-acid chain: Large ribosomal subunit protein uL3 (219 aa).

It belongs to the universal ribosomal protein uL3 family. Part of the 50S ribosomal subunit. Forms a cluster with proteins L14 and L19.

One of the primary rRNA binding proteins, it binds directly near the 3'-end of the 23S rRNA, where it nucleates assembly of the 50S subunit. This chain is Large ribosomal subunit protein uL3, found in Salinispora arenicola (strain CNS-205).